The sequence spans 211 residues: MAPSRNGMILKPHFHKDWQQRVDTWFNQPARKIRRRKARQAKARRIAPRPASGPIRPIVRCPTVRYHTKVRAGRGFSLEELRVAGIHKKMARTIGISVDPRRRNKSTESLQANVQRLKEYRSKLILFPRKPSAPKKGDSSAEELKLATQLTGPVMPIRNVYKKEKARAITEEEKNFKAFASLRMARANARLFGIRAKRAKEAAEQDVEKKK.

N6-acetyllysine is present on lysine 16. Residues serine 52, serine 77, and serine 106 each carry the phosphoserine modification. Glycyl lysine isopeptide (Lys-Gly) (interchain with G-Cter in SUMO2) cross-links involve residues lysine 123 and lysine 145. A Glycyl lysine isopeptide (Lys-Gly) (interchain with G-Cter in SUMO1); alternate cross-link involves residue lysine 174. Glycyl lysine isopeptide (Lys-Gly) (interchain with G-Cter in SUMO2); alternate cross-links involve residues lysine 174 and lysine 177. An N6-acetyllysine; alternate modification is found at lysine 177.

This sequence belongs to the eukaryotic ribosomal protein eL13 family. In terms of assembly, component of the 60S large ribosomal subunit (LSU).

It is found in the cytoplasm. In terms of biological role, component of the ribosome, a large ribonucleoprotein complex responsible for the synthesis of proteins in the cell. The small ribosomal subunit (SSU) binds messenger RNAs (mRNAs) and translates the encoded message by selecting cognate aminoacyl-transfer RNA (tRNA) molecules. The large subunit (LSU) contains the ribosomal catalytic site termed the peptidyl transferase center (PTC), which catalyzes the formation of peptide bonds, thereby polymerizing the amino acids delivered by tRNAs into a polypeptide chain. The nascent polypeptides leave the ribosome through a tunnel in the LSU and interact with protein factors that function in enzymatic processing, targeting, and the membrane insertion of nascent chains at the exit of the ribosomal tunnel. As part of the LSU, it is probably required for its formation and the maturation of rRNAs. Plays a role in bone development. The chain is Large ribosomal subunit protein eL13 (Rpl13) from Rattus norvegicus (Rat).